An 87-amino-acid chain; its full sequence is Glutaredoxin (87 aa).

One can recognise a Glutaredoxin domain in the interval 1-87 (MFVVIFGRPG…LMKEQFGIVA (87 aa)). C11 and C14 form a disulfide bridge.

The protein belongs to the glutaredoxin family. In terms of assembly, monomer.

The protein resides in the cytoplasm. Functionally, has a glutathione-disulfide oxidoreductase activity in the presence of NADPH and glutathione reductase. Reduces low molecular weight disulfides and proteins. The protein is Glutaredoxin (grxA) of Haemophilus influenzae (strain ATCC 51907 / DSM 11121 / KW20 / Rd).